The sequence spans 199 residues: Cytochrome c oxidase subunit 2 (199 aa).

Residues 1 to 13 traverse the membrane as a helical segment; the sequence is AICSLVLYLLTLM. At 14–26 the chain is on the mitochondrial matrix side; sequence LMEKLSSNTVDAQ. Residues 27-54 form a helical membrane-spanning segment; the sequence is EVELIWTILPAIVLILLALPSLQILYMM. Residues 55–199 are Mitochondrial intermembrane-facing; that stretch reads DEIDEPDLTL…SSLLSASSSL (145 aa). Residues H128, C163, E165, C167, H171, and M174 each contribute to the Cu cation site. E165 is a Mg(2+) binding site.

Belongs to the cytochrome c oxidase subunit 2 family. Component of the cytochrome c oxidase (complex IV, CIV), a multisubunit enzyme composed of 14 subunits. The complex is composed of a catalytic core of 3 subunits MT-CO1, MT-CO2 and MT-CO3, encoded in the mitochondrial DNA, and 11 supernumerary subunits COX4I, COX5A, COX5B, COX6A, COX6B, COX6C, COX7A, COX7B, COX7C, COX8 and NDUFA4, which are encoded in the nuclear genome. The complex exists as a monomer or a dimer and forms supercomplexes (SCs) in the inner mitochondrial membrane with NADH-ubiquinone oxidoreductase (complex I, CI) and ubiquinol-cytochrome c oxidoreductase (cytochrome b-c1 complex, complex III, CIII), resulting in different assemblies (supercomplex SCI(1)III(2)IV(1) and megacomplex MCI(2)III(2)IV(2)). Found in a complex with TMEM177, COA6, COX18, COX20, SCO1 and SCO2. Interacts with TMEM177 in a COX20-dependent manner. Interacts with COX20. Interacts with COX16. The cofactor is Cu cation.

Its subcellular location is the mitochondrion inner membrane. The enzyme catalyses 4 Fe(II)-[cytochrome c] + O2 + 8 H(+)(in) = 4 Fe(III)-[cytochrome c] + 2 H2O + 4 H(+)(out). Functionally, component of the cytochrome c oxidase, the last enzyme in the mitochondrial electron transport chain which drives oxidative phosphorylation. The respiratory chain contains 3 multisubunit complexes succinate dehydrogenase (complex II, CII), ubiquinol-cytochrome c oxidoreductase (cytochrome b-c1 complex, complex III, CIII) and cytochrome c oxidase (complex IV, CIV), that cooperate to transfer electrons derived from NADH and succinate to molecular oxygen, creating an electrochemical gradient over the inner membrane that drives transmembrane transport and the ATP synthase. Cytochrome c oxidase is the component of the respiratory chain that catalyzes the reduction of oxygen to water. Electrons originating from reduced cytochrome c in the intermembrane space (IMS) are transferred via the dinuclear copper A center (CU(A)) of subunit 2 and heme A of subunit 1 to the active site in subunit 1, a binuclear center (BNC) formed by heme A3 and copper B (CU(B)). The BNC reduces molecular oxygen to 2 water molecules using 4 electrons from cytochrome c in the IMS and 4 protons from the mitochondrial matrix. In Dromaius novaehollandiae (Emu), this protein is Cytochrome c oxidase subunit 2 (MT-CO2).